Reading from the N-terminus, the 371-residue chain is uncharacterized protein (371 aa).

Residue Gly-33–Thr-40 coordinates ATP.

This sequence belongs to the archaeal ATPase family.

This is an uncharacterized protein from Methanocaldococcus jannaschii (strain ATCC 43067 / DSM 2661 / JAL-1 / JCM 10045 / NBRC 100440) (Methanococcus jannaschii).